Consider the following 287-residue polypeptide: NAD kinase (287 aa).

The active-site Proton acceptor is the Asp66. NAD(+) contacts are provided by residues 66-67, 137-138, Arg148, Arg165, Asp167, and 178-183; these read DG, ND, and TAYSMS.

It belongs to the NAD kinase family. Requires a divalent metal cation as cofactor.

The protein localises to the cytoplasm. It carries out the reaction NAD(+) + ATP = ADP + NADP(+) + H(+). In terms of biological role, involved in the regulation of the intracellular balance of NAD and NADP, and is a key enzyme in the biosynthesis of NADP. Catalyzes specifically the phosphorylation on 2'-hydroxyl of the adenosine moiety of NAD to yield NADP. The protein is NAD kinase of Chlorobium limicola (strain DSM 245 / NBRC 103803 / 6330).